Consider the following 235-residue polypeptide: tRNA (guanine-N(1)-)-methyltransferase (235 aa).

S-adenosyl-L-methionine contacts are provided by residues G114 and 134 to 139; that span reads VGDYIL.

The protein belongs to the RNA methyltransferase TrmD family. In terms of assembly, homodimer.

The protein resides in the cytoplasm. The catalysed reaction is guanosine(37) in tRNA + S-adenosyl-L-methionine = N(1)-methylguanosine(37) in tRNA + S-adenosyl-L-homocysteine + H(+). Specifically methylates guanosine-37 in various tRNAs. This is tRNA (guanine-N(1)-)-methyltransferase from Chelativorans sp. (strain BNC1).